Consider the following 207-residue polypeptide: Putative transcriptional regulator (207 aa).

Residues 3–118 (KVLIVDDHPA…ELLLAAKAVL (116 aa)) form the Response regulatory domain. 2 positions are modified to 4-aspartylphosphate: aspartate 9 and aspartate 53. The HTH luxR-type domain occupies 140-205 (EARMLESLSD…GLIDFARRHE (66 aa)). Positions 155-174 (LQYLANGNTNKAIAQQLFLS) form a DNA-binding region, H-T-H motif.

Probable transcriptional regulator. This is Putative transcriptional regulator from Pseudomonas aeruginosa (strain ATCC 15692 / DSM 22644 / CIP 104116 / JCM 14847 / LMG 12228 / 1C / PRS 101 / PAO1).